The sequence spans 238 residues: Leucyl/phenylalanyl-tRNA--protein transferase (238 aa).

Belongs to the L/F-transferase family.

It is found in the cytoplasm. It catalyses the reaction N-terminal L-lysyl-[protein] + L-leucyl-tRNA(Leu) = N-terminal L-leucyl-L-lysyl-[protein] + tRNA(Leu) + H(+). It carries out the reaction N-terminal L-arginyl-[protein] + L-leucyl-tRNA(Leu) = N-terminal L-leucyl-L-arginyl-[protein] + tRNA(Leu) + H(+). The enzyme catalyses L-phenylalanyl-tRNA(Phe) + an N-terminal L-alpha-aminoacyl-[protein] = an N-terminal L-phenylalanyl-L-alpha-aminoacyl-[protein] + tRNA(Phe). Its function is as follows. Functions in the N-end rule pathway of protein degradation where it conjugates Leu, Phe and, less efficiently, Met from aminoacyl-tRNAs to the N-termini of proteins containing an N-terminal arginine or lysine. The protein is Leucyl/phenylalanyl-tRNA--protein transferase of Psychromonas ingrahamii (strain DSM 17664 / CCUG 51855 / 37).